The primary structure comprises 393 residues: NAD(P)H-quinone oxidoreductase subunit H, chloroplastic (393 aa).

This sequence belongs to the complex I 49 kDa subunit family. NDH is composed of at least 16 different subunits, 5 of which are encoded in the nucleus.

It is found in the plastid. The protein localises to the chloroplast thylakoid membrane. It catalyses the reaction a plastoquinone + NADH + (n+1) H(+)(in) = a plastoquinol + NAD(+) + n H(+)(out). It carries out the reaction a plastoquinone + NADPH + (n+1) H(+)(in) = a plastoquinol + NADP(+) + n H(+)(out). NDH shuttles electrons from NAD(P)H:plastoquinone, via FMN and iron-sulfur (Fe-S) centers, to quinones in the photosynthetic chain and possibly in a chloroplast respiratory chain. The immediate electron acceptor for the enzyme in this species is believed to be plastoquinone. Couples the redox reaction to proton translocation, and thus conserves the redox energy in a proton gradient. This Oryza nivara (Indian wild rice) protein is NAD(P)H-quinone oxidoreductase subunit H, chloroplastic.